The primary structure comprises 254 residues: D-aminoacyl-tRNA deacylase (254 aa).

Residues 61 to 82 (KPTLTVHTPGNLTDDNSHGGNP) are disordered. Positions 65–74 (TVHTPGNLTD) are enriched in polar residues.

It belongs to the DtdA deacylase family. Monomer. Requires Zn(2+) as cofactor.

The catalysed reaction is a D-aminoacyl-tRNA + H2O = a tRNA + a D-alpha-amino acid + H(+). It carries out the reaction glycyl-tRNA(Ala) + H2O = tRNA(Ala) + glycine + H(+). D-aminoacyl-tRNA deacylase with broad substrate specificity. By recycling D-aminoacyl-tRNA to D-amino acids and free tRNA molecules, this enzyme counteracts the toxicity associated with the formation of D-aminoacyl-tRNA entities in vivo. The polypeptide is D-aminoacyl-tRNA deacylase (Methanococcus maripaludis (strain DSM 14266 / JCM 13030 / NBRC 101832 / S2 / LL)).